Consider the following 126-residue polypeptide: Small ribosomal subunit protein uS13 (126 aa).

Positions 95 to 126 (GLPVRGQQTRTNARTRKGKRKTVGGTKKAKAK) are disordered. The span at 107–126 (ARTRKGKRKTVGGTKKAKAK) shows a compositional bias: basic residues.

Belongs to the universal ribosomal protein uS13 family. As to quaternary structure, part of the 30S ribosomal subunit. Forms a loose heterodimer with protein S19. Forms two bridges to the 50S subunit in the 70S ribosome.

Located at the top of the head of the 30S subunit, it contacts several helices of the 16S rRNA. In the 70S ribosome it contacts the 23S rRNA (bridge B1a) and protein L5 of the 50S subunit (bridge B1b), connecting the 2 subunits; these bridges are implicated in subunit movement. Contacts the tRNAs in the A and P-sites. The chain is Small ribosomal subunit protein uS13 from Aquifex aeolicus (strain VF5).